The primary structure comprises 341 residues: Fructose-1,6-bisphosphatase, cytosolic (341 aa).

Mg(2+) contacts are provided by E71, E100, D121, L123, and D124. Residues 124–127 (DGCS), N215, Y247, Y267, and K277 contribute to the substrate site. A Mg(2+)-binding site is contributed by E283.

This sequence belongs to the FBPase class 1 family. It depends on Mg(2+) as a cofactor.

The protein resides in the cytoplasm. The catalysed reaction is beta-D-fructose 1,6-bisphosphate + H2O = beta-D-fructose 6-phosphate + phosphate. This is Fructose-1,6-bisphosphatase, cytosolic from Beta vulgaris (Sugar beet).